A 358-amino-acid chain; its full sequence is Acyl-CoA desaturase 1 (358 aa).

Residues 1 to 71 (MPAHMLQEIS…EGPPPKLEYV (71 aa)) are Cytoplasmic-facing. Over residues 8–24 (EISSSYTTTTTITEPPS) the composition is skewed to low complexity. The segment at 8-33 (EISSSYTTTTTITEPPSGNLQNGREK) is disordered. The helical transmembrane segment at 72 to 92 (WRNIILMALLHVGALYGITLI) threads the bilayer. Substrate is bound at residue N74. The Lumenal segment spans residues 93–96 (PSSK). Residues 97–117 (VYTLLWGIFYYLISALGITAG) form a helical membrane-spanning segment. At 118–216 (AHRLWSHRTY…EKLVMFQRRY (99 aa)) the chain is on the cytoplasmic side. Positions 119 and 124 each coordinate Fe cation. A Histidine box-1 motif is present at residues 119–124 (HRLWSH). Substrate is bound by residues N147, R154, and D155. Fe cation contacts are provided by H156, H159, and H160. A Histidine box-2 motif is present at residues 156–160 (HRAHH). 2 residues coordinate substrate: R187 and K188. Residues 217-236 (YKPGLLLMCFILPTLVPWYC) traverse the membrane as a helical segment. At 237 to 240 (WGET) the chain is on the lumenal side. Residues 241 to 262 (FLHSLFVSTFLRYTLVLNATWL) form a helical membrane-spanning segment. W261 contributes to the substrate binding site. Topologically, residues 263–358 (VNSAAHLYGY…RTGDGSHKSS (96 aa)) are cytoplasmic. Fe cation-binding residues include H268, H297, H300, and H301. A Histidine box-3 motif is present at residues 297-301 (HNYHH).

The protein belongs to the fatty acid desaturase type 1 family. Fe(2+) serves as cofactor. In terms of tissue distribution, detected in liver (at protein level). Detected in adipose tissue. Detected in liver when rats are kept on a fat-free diet, but not when their food contains unsaturated fatty acids.

Its subcellular location is the endoplasmic reticulum membrane. The protein resides in the membrane. It carries out the reaction octadecanoyl-CoA + 2 Fe(II)-[cytochrome b5] + O2 + 2 H(+) = (9Z)-octadecenoyl-CoA + 2 Fe(III)-[cytochrome b5] + 2 H2O. Its function is as follows. Stearoyl-CoA desaturase that utilizes O(2) and electrons from reduced cytochrome b5 to introduce the first double bond into saturated fatty acyl-CoA substrates. Catalyzes the insertion of a cis double bond at the Delta-9 position into fatty acyl-CoA substrates including palmitoyl-CoA and stearoyl-CoA. Gives rise to a mixture of 16:1 and 18:1 unsaturated fatty acids. Plays an important role in lipid biosynthesis. Plays an important role in regulating the expression of genes that are involved in lipogenesis and in regulating mitochondrial fatty acid oxidation. Plays an important role in body energy homeostasis. Contributes to the biosynthesis of membrane phospholipids, cholesterol esters and triglycerides. Required for normal development of sebaceous glands. Required for the biosynthesis of normal levels of Delta-9 unsaturated fatty acids and 1-alkyl-2,3-diacylglycerol in the Harderian gland. Required for normal production of meibum, an oily material that prevents drying of the cornea. In Rattus norvegicus (Rat), this protein is Acyl-CoA desaturase 1 (Scd1).